Consider the following 143-residue polypeptide: Large ribosomal subunit protein uL13 (143 aa).

It belongs to the universal ribosomal protein uL13 family. As to quaternary structure, part of the 50S ribosomal subunit.

This protein is one of the early assembly proteins of the 50S ribosomal subunit, although it is not seen to bind rRNA by itself. It is important during the early stages of 50S assembly. This chain is Large ribosomal subunit protein uL13, found in Natranaerobius thermophilus (strain ATCC BAA-1301 / DSM 18059 / JW/NM-WN-LF).